Consider the following 738-residue polypeptide: Autophagy-related protein 13 (738 aa).

2 disordered regions span residues Ala279–Gln359 and Val377–Gln462. Composition is skewed to low complexity over residues Asn284–Gln297 and Gln306–Gln338. Ser344 carries the post-translational modification Phosphoserine; by PKA. Residues Leu345 to Gln359 are compositionally biased toward polar residues. Ser348 is modified (phosphoserine; by TORC1). Residue Ser355 is modified to Phosphoserine. Low complexity-rich tracts occupy residues Ser382 to Pro399 and Gly417 to Ser429. Positions Asn432–Met520 are interaction with ATG1. Residue Ser437 is modified to Phosphoserine; by TORC1 and PKA. Ser438 is subject to Phosphoserine; by TORC1. 2 positions are modified to phosphoserine: Ser461 and Ser496. The segment at Asp521–Tyr605 is disordered. Composition is skewed to polar residues over residues His534 to Asn558 and Ser570 to Arg579. Phosphoserine; by TORC1 occurs at positions 535 and 541. A Phosphoserine modification is found at Ser554. Ser581 bears the Phosphoserine; by PKA mark. Phosphoserine; by TORC1 is present on residues Ser646 and Ser649. The tract at residues Lys690–Asp719 is disordered. Positions Asn694–Asn708 are enriched in low complexity.

The protein belongs to the ATG13 family. Fungi subfamily. Hypophosphorylated form interacts with ATG1 to form the ATG1-ATG13 kinase complex. The ATG1-ATG13 complex interacts with the ATG17-ATG29-ATG31 complex through direct interaction with ATG17. Interacts with VAC8. In terms of processing, phosphorylated; hyperphosphorylated by the TORC1 kinase complex to repress the induction of autophagy. Starvation and TOR inactivation results in ATG13 partial dephosphorylation leading to ATG1-binding. Rephosphorylated by ATG1 during prolonged nitrogen starvation. Also phosphorylated by TPK1; TPK1 phosphorylation regulates the association of ATG13 with the PAS. Within this regulatory network, mitochondrial respiratory deficiency suppresses autophagic flux. Hyperphosphorylation in rich medium is impaired in the absence of VAC8.

It localises to the cytoplasm. The protein localises to the preautophagosomal structure. Activates the ATG1 kinase in a nutritional condition dependent manner through the TOR pathway, leading to autophagy. Required for autophosphorylation of ATG1 at 'Thr-226' and its dimerization. May also be involved in the regulation of autophagy through SNF1. Involved in ATG9 and ATG23 cycling through the pre-autophagosomal structure. Also involved in cytoplasm to vacuole transport (Cvt) and more specifically in Cvt vesicle formation. Seems to play a role in the switching machinery regulating the conversion between the Cvt pathway and autophagy. Finally, ATG13 is also required for glycogen storage during stationary phase. This is Autophagy-related protein 13 (ATG13) from Saccharomyces cerevisiae (strain YJM789) (Baker's yeast).